The following is a 152-amino-acid chain: Avidin (152 aa).

The signal sequence occupies residues 1–24; sequence MVHATSPLLLLLLLSLALVAPGLS. An Avidin-like domain is found at 26–149; it reads RKCSLTGKWT…GINIFTRLRT (124 aa). A disulfide bond links cysteine 28 and cysteine 107. Asparagine 41 is a glycosylation site (N-linked (GlcNAc...) asparagine). Residue tyrosine 57 participates in biotin binding.

The protein belongs to the avidin/streptavidin family. Homotetramer. N-linked glycan at Asn-41 consists of GlcNAc(beta1-2)Man(alpha1-3)[GlcNAc(beta1-4)][Man(alpha1-?)Man(alpha1-6)] Man(beta1-4)GlcNAc(beta1-4)GlcNAc. Synthesized in hen oviduct and concentrated in egg white (where it represents 0.05% of the total protein).

It localises to the secreted. The biological function of avidin is not known. Forms a strong non-covalent specific complex with biotin (one molecule of biotin per subunit of avidin). This chain is Avidin (AVD), found in Gallus gallus (Chicken).